The chain runs to 157 residues: Small ribosomal subunit protein uS7 (157 aa).

This sequence belongs to the universal ribosomal protein uS7 family. As to quaternary structure, part of the 30S ribosomal subunit. Contacts proteins S9 and S11.

In terms of biological role, one of the primary rRNA binding proteins, it binds directly to 16S rRNA where it nucleates assembly of the head domain of the 30S subunit. Is located at the subunit interface close to the decoding center, probably blocks exit of the E-site tRNA. This is Small ribosomal subunit protein uS7 from Caulobacter sp. (strain K31).